Here is a 335-residue protein sequence, read N- to C-terminus: MSNKLCQLCNERRPALVRPKTGQKICKECFYYVFETEIHNVIIENKLFVRGERVGIGASGGKDSTVLAYVMKLLNERYDYGLELYLISVDEGIRGYRDDSLDTVKRNQQQYGLPMKIVSYADLYDGWTMDNVVARIGTKNNCTYCGVFRRQALDRAALSLDIHHLVTGHNADDIAETILMNLLRGDVARLPRSTEITTQSDSSPTKRSKPFKYSYEKEIVLYAHYKKLDYFSTECTYSPEAFRGTARAMIKQLENIRPSSILDIIYSGESMQLASSVQEQLPQQTTCERCGFISSNRICKACMLLEGLNKGITGLGLGSDRKTKKLQSQIPACAE.

It belongs to the TtcA family. CTU1/NCS6/ATPBD3 subfamily. In terms of assembly, interacts with ctu2.

It is found in the cytoplasm. The protein operates within tRNA modification; 5-methoxycarbonylmethyl-2-thiouridine-tRNA biosynthesis. In terms of biological role, plays a central role in 2-thiolation of mcm(5)S(2)U at tRNA wobble positions of tRNA(Lys), tRNA(Glu) and tRNA(Gln). Directly binds tRNAs and probably acts by catalyzing adenylation of tRNAs, an intermediate required for 2-thiolation. It is unclear whether it acts as a sulfurtransferase that transfers sulfur from thiocarboxylated urm1 onto the uridine of tRNAs at wobble position. Prior mcm(5) tRNA modification by the elongator complex is required for 2-thiolation. May also be involved in protein urmylation. The polypeptide is Cytoplasmic tRNA 2-thiolation protein 1 (ncs6) (Schizosaccharomyces pombe (strain 972 / ATCC 24843) (Fission yeast)).